A 622-amino-acid chain; its full sequence is Coiled-coil domain-containing protein 17 (622 aa).

3 coiled-coil regions span residues 81-102 (RSALKRLTEEVQWLRLSLQEMR), 146-207 (ARRV…LEVL), and 294-320 (GELPVVEAENRRLEAEILALQMQRGRA). Disordered stretches follow at residues 334-356 (SLQPKGRRDPPLLPPPVAPPLPP) and 584-622 (PAVGFADPPPRTEEPLSGVKDRDEGLGPHHSSDLPPVSF). The segment covering 344–356 (PLLPPPVAPPLPP) has biased composition (pro residues). Basic and acidic residues predominate over residues 593-615 (PRTEEPLSGVKDRDEGLGPHHSS).

This chain is Coiled-coil domain-containing protein 17 (CCDC17), found in Homo sapiens (Human).